We begin with the raw amino-acid sequence, 142 residues long: 3-hydroxyacyl-[acyl-carrier-protein] dehydratase FabZ (142 aa).

His-48 is an active-site residue.

This sequence belongs to the thioester dehydratase family. FabZ subfamily.

It is found in the cytoplasm. It catalyses the reaction a (3R)-hydroxyacyl-[ACP] = a (2E)-enoyl-[ACP] + H2O. Functionally, involved in unsaturated fatty acids biosynthesis. Catalyzes the dehydration of short chain beta-hydroxyacyl-ACPs and long chain saturated and unsaturated beta-hydroxyacyl-ACPs. The sequence is that of 3-hydroxyacyl-[acyl-carrier-protein] dehydratase FabZ from Natranaerobius thermophilus (strain ATCC BAA-1301 / DSM 18059 / JW/NM-WN-LF).